The sequence spans 357 residues: RNA 3'-terminal phosphate cyclase (357 aa).

ATP-binding positions include Gln-102 and 293–296; that span reads HMGD. His-319 (tele-AMP-histidine intermediate) is an active-site residue.

The protein belongs to the RNA 3'-terminal cyclase family. Type 1 subfamily.

It is found in the cytoplasm. It catalyses the reaction a 3'-end 3'-phospho-ribonucleotide-RNA + ATP = a 3'-end 2',3'-cyclophospho-ribonucleotide-RNA + AMP + diphosphate. Functionally, catalyzes the conversion of 3'-phosphate to a 2',3'-cyclic phosphodiester at the end of RNA. The mechanism of action of the enzyme occurs in 3 steps: (A) adenylation of the enzyme by ATP; (B) transfer of adenylate to an RNA-N3'P to produce RNA-N3'PP5'A; (C) and attack of the adjacent 2'-hydroxyl on the 3'-phosphorus in the diester linkage to produce the cyclic end product. The biological role of this enzyme is unknown but it is likely to function in some aspects of cellular RNA processing. The sequence is that of RNA 3'-terminal phosphate cyclase from Staphylothermus marinus (strain ATCC 43588 / DSM 3639 / JCM 9404 / F1).